We begin with the raw amino-acid sequence, 288 residues long: MELRDLQIFQSVADQGSVSSAAKELNYVQSNVTARIKQLENELKTPLFYRHKRGMTLTAEGRKMLVYVNKILQDVDELKQVFLDSETPSGILKIGTVETVSTLPTILSSYYKSYPNVDLSLQAGLTEELIREVLDHQLDGAFISGPIKHPLIEQYDVSTEKLMLVTQNKTFHIEEFTTTPLLVFNQGCGYRSKLERWLKDEGLLPKRIMEFNILETLLNSVALGLGITLVPQSAVHHLSKAGKVHCHAIPEKYGSISTVFIRRKDSYMTNSMRSFLKTIEEHHHINML.

An HTH lysR-type domain is found at 1–58 (MELRDLQIFQSVADQGSVSSAAKELNYVQSNVTARIKQLENELKTPLFYRHKRGMTLT). The H-T-H motif DNA-binding region spans 18 to 37 (VSSAAKELNYVQSNVTARIK).

This sequence belongs to the LysR transcriptional regulatory family.

This Bacillus anthracis protein is HTH-type transcriptional regulator CzcR (czcR).